The sequence spans 31 residues: Cyclotide vpub-A (31 aa).

The cyclopeptide (Gly-Asn) cross-link spans 1-31 (GVIPCGESCVFIPCISAVIGCSCKSKVCYRN). 3 disulfide bridges follow: Cys-5–Cys-21, Cys-9–Cys-23, and Cys-14–Cys-28.

It belongs to the cyclotide family. Bracelet subfamily. This is a cyclic peptide.

In terms of biological role, probably participates in a plant defense mechanism. This chain is Cyclotide vpub-A, found in Viola pubescens (Downy yellow violet).